The following is a 156-amino-acid chain: Small ribosomal subunit protein uS7c (156 aa).

It belongs to the universal ribosomal protein uS7 family. As to quaternary structure, part of the 30S ribosomal subunit.

The protein resides in the plastid. Its function is as follows. One of the primary rRNA binding proteins, it binds directly to 16S rRNA where it nucleates assembly of the head domain of the 30S subunit. This Prototheca wickerhamii protein is Small ribosomal subunit protein uS7c (rps7).